We begin with the raw amino-acid sequence, 648 residues long: Siderophore transporter MYCGRDRAFT_70577 (648 aa).

Basic and acidic residues-rich tracts occupy residues 1–11 (MRTSSESHSRS) and 29–46 (SASK…DTSI). A disordered region spans residues 1 to 58 (MRTSSESHSRSDAFNGKNDASQVTVDSDSASKDHHDHDHHHKDTSINERQSQHVHQQA). Over residues 47–58 (NERQSQHVHQQA) the composition is skewed to polar residues. 11 helical membrane passes run 79 to 99 (LLLY…ALDQ), 151 to 171 (VVVL…QGLA), 205 to 225 (AFWS…NGFI), 236 to 256 (WGLG…IWTL), 303 to 323 (LIGL…LNLA), 336 to 356 (IAML…EALL), 409 to 429 (TIFI…GGLI), 438 to 458 (TLMV…LDGN), 468 to 488 (LAVS…ARVG), 500 to 520 (VVIS…STIA), and 578 to 598 (GIIL…SCLM).

Belongs to the major facilitator superfamily.

It is found in the cell membrane. In terms of biological role, siderophore transporter; part of the gene cluster 14 that mediates the biosynthesis of a ferrichrome A-like siderophors which may contribute to organismal virulence. This Zymoseptoria tritici (strain CBS 115943 / IPO323) (Speckled leaf blotch fungus) protein is Siderophore transporter MYCGRDRAFT_70577.